The primary structure comprises 449 residues: UNC93-like protein MFSD11 (449 aa).

Residues 8–28 (LFNIVILGVAFMFMFTAFQTC) traverse the membrane as a helical segment. An N-linked (GlcNAc...) asparagine glycan is attached at N40. 5 helical membrane-spanning segments follow: residues 53 to 73 (AIIY…VAIV), 74 to 94 (GPQI…AVFI), 96 to 116 (PFPW…AVLW), 138 to 158 (IFWA…YFAW), and 170 to 190 (RTVF…FFLI). A Phosphoserine modification is found at S204. A run of 6 helical transmembrane segments spans residues 239–259 (MLLL…FSGV), 277–297 (LIGL…SLFG), 309–329 (PVVL…FLNM), 359–379 (FLLG…LGFL), 385–405 (APAF…AFFY), and 410–430 (LLHW…ISFF).

It belongs to the unc-93 family. As to expression, widely expressed.

The protein resides in the membrane. This is UNC93-like protein MFSD11 (Mfsd11) from Mus musculus (Mouse).